The sequence spans 78 residues: MSKVCQVTGKRPITGHNVSHAKNHTKRRFLPNLQTHRFWVEAEKRFVTLRLTPKGMRIIDKLGIEAVLADIRARGEKV.

Positions 1–21 are disordered; sequence MSKVCQVTGKRPITGHNVSHA.

It belongs to the bacterial ribosomal protein bL28 family.

This is Large ribosomal subunit protein bL28 from Cellvibrio japonicus (strain Ueda107) (Pseudomonas fluorescens subsp. cellulosa).